The chain runs to 301 residues: Probable alpha-L-glutamate ligase (301 aa).

Residues 104-287 (LQLLSRRGVG…VAGLIIQYLE (184 aa)) enclose the ATP-grasp domain. ATP-binding positions include K141, 178–179 (EY), D187, and 211–213 (RSN). Residues D248, E260, and N262 each coordinate Mg(2+). Mn(2+) is bound by residues D248, E260, and N262.

It belongs to the RimK family. It depends on Mg(2+) as a cofactor. Mn(2+) is required as a cofactor.

In Stutzerimonas stutzeri (strain A1501) (Pseudomonas stutzeri), this protein is Probable alpha-L-glutamate ligase.